A 462-amino-acid polypeptide reads, in one-letter code: UDP-N-acetylmuramoylalanine--D-glutamate ligase (462 aa).

120-126 is a binding site for ATP; sequence GTNGKTT.

This sequence belongs to the MurCDEF family.

It localises to the cytoplasm. The catalysed reaction is UDP-N-acetyl-alpha-D-muramoyl-L-alanine + D-glutamate + ATP = UDP-N-acetyl-alpha-D-muramoyl-L-alanyl-D-glutamate + ADP + phosphate + H(+). Its pathway is cell wall biogenesis; peptidoglycan biosynthesis. Functionally, cell wall formation. Catalyzes the addition of glutamate to the nucleotide precursor UDP-N-acetylmuramoyl-L-alanine (UMA). This chain is UDP-N-acetylmuramoylalanine--D-glutamate ligase, found in Bdellovibrio bacteriovorus (strain ATCC 15356 / DSM 50701 / NCIMB 9529 / HD100).